The primary structure comprises 373 residues: Plasmepsin VIII (373 aa).

The signal sequence occupies residues 1 to 21 (MNKFFVFPLLLILNSIVLVKS). Residues 50–370 (FIGEISIGNP…EKDNMRIGLA (321 aa)) form the Peptidase A1 domain. Active-site residues include Asp-68 and Asp-258.

Belongs to the peptidase A1 family.

In terms of biological role, during the development in the mosquito vector, plays an essential role in sporozoite egress from the oocyst and sporozoite gliding motility, which is required for the invasion of salivary glands and subsequent transmission to the host. This Plasmodium berghei (strain Anka) protein is Plasmepsin VIII.